Reading from the N-terminus, the 170-residue chain is Tachykinin-4 (170 aa).

A signal peptide spans 1-16 (MLPLLALFLLIGPAVS). A propeptide spanning residues 17 to 54 (TTTRDREDLTFGAEAESWVTVNLKGIPVPSIELKLQEL) is cleaved from the precursor. A Methionine amide modification is found at Met66. The propeptide occupies 67–170 (GKRVEGVHPI…SQMMPRPSRP (104 aa)). The tract at residues 107–170 (QETNHQSAGP…SQMMPRPSRP (64 aa)) is disordered. Positions 123–140 (SLQSQRGRSEPPNHQQHV) are enriched in polar residues.

This sequence belongs to the tachykinin family.

It is found in the secreted. Tachykinins are active peptides which excite neurons, evoke behavioral responses, are potent vasodilators and secretagogues, and contract (directly or indirectly) many smooth muscles. Hemokinin induces plasma extravasation, mast cell degranulation, muscle contraction, salivary secretion and scratching behavior. Increases sperm motility. Induces potent analgesic effects and may play a role in pain modulation. Promotes survival of bone marrow B lineage cells and of cultured LPS-stimulated pre-B cells and may act as an autocrine factor required for B-cell survival and proliferation. Lowers systemic arterial pressure following intravenous injection. Induces interferon-gamma production and may play a role in the inflammatory response. Shows potent affinity and specificity for the NK-1 receptor. The protein is Tachykinin-4 of Rattus norvegicus (Rat).